Consider the following 453-residue polypeptide: Probable glycine dehydrogenase (decarboxylating) subunit 1 (453 aa).

It belongs to the GcvP family. N-terminal subunit subfamily. The glycine cleavage system is composed of four proteins: P, T, L and H. In this organism, the P 'protein' is a heterodimer of two subunits.

It carries out the reaction N(6)-[(R)-lipoyl]-L-lysyl-[glycine-cleavage complex H protein] + glycine + H(+) = N(6)-[(R)-S(8)-aminomethyldihydrolipoyl]-L-lysyl-[glycine-cleavage complex H protein] + CO2. Its function is as follows. The glycine cleavage system catalyzes the degradation of glycine. The P protein binds the alpha-amino group of glycine through its pyridoxal phosphate cofactor; CO(2) is released and the remaining methylamine moiety is then transferred to the lipoamide cofactor of the H protein. This Caulobacter sp. (strain K31) protein is Probable glycine dehydrogenase (decarboxylating) subunit 1.